The sequence spans 572 residues: MRAISKLFVFTVLVLGSLQYYCGRYGACPAQIAVISHYTWPCTYAPAVRDKLGKASEWYGANAAPHVSVASGWMQGKVMPHLTKVSQWTEKHVQPRMRQAGADAIVTARVAWNVVQQYQRRHVVPLTGRLLAKCPCLERWAEQAARGWQWLCKHARALATAVQQQYPAFVAHMGGIWEPLHGAYNRIYLDLGRPVQEKTSEDASAAPGGTQYITSTITMTMTSLDELVTVTAEDGLSDVVEASFKDLVADEFSAWQQAIERKADSVLQAFTEEVGEFEMQQHEAVAPKFRALLKHISAKSQEHYAKINQAIRDINSTMELDPATNQTIWFDAHGTQLHQYITRPLMREYFSQANDELANITNHIRAELREVVDSVNGQVDVIRQEHIEVYEEWADVMVSEWSRRMAYIDVVDRDLEAEAERNRNWKRFLKLKKRVIKVRDQLLEHPVKFNQLETFLKEIQSTLRILAQENGEYLYILRSKANLSFQEREKNDRLREQHEQEAREMTLREQLSTELAANGTEVIIDTFEVDLDQLLRSNSTSWSVPPADARAEPASGSPIQQAASEAAQQPSV.

The N-terminal stretch at 1–19 (MRAISKLFVFTVLVLGSLQ) is a signal peptide. Coiled-coil stretches lie at residues 351–372 (SQAN…REVV) and 485–510 (FQER…LREQ). Positions 539 to 572 (STSWSVPPADARAEPASGSPIQQAASEAAQQPSV) are disordered. The segment covering 560 to 572 (QQAASEAAQQPSV) has biased composition (low complexity).

Belongs to the SHE10 family. In terms of assembly, component of the mitochondria-localized RNase mitochondrial RNA-processing (RNase MRP) composed of one single RNA encoded by the NME1 gene and at least 31 proteins. Absent in the nucleus-localized RNase MRP (NuMRP).

It is found in the mitochondrion. Involved in spore wall assembly. May be a component of the mitochondrial RNase MRP (MtMRP), a ribonucleoprotein endoribonuclease involved in the cleaving RNA transcripts to generate primers for DNA replication in mitochondria. This is Outer spore wall assembly protein SHE10 from Eremothecium gossypii (strain ATCC 10895 / CBS 109.51 / FGSC 9923 / NRRL Y-1056) (Yeast).